Reading from the N-terminus, the 413-residue chain is Phosphoglycerate kinase (413 aa).

Substrate is bound by residues 24-26 (DFN), Arg-39, 62-65 (HLSR), Arg-123, and Arg-165. Residues Lys-216, Glu-343, and 369–372 (GGDS) each bind ATP.

The protein belongs to the phosphoglycerate kinase family. Monomer.

Its subcellular location is the cytoplasm. It carries out the reaction (2R)-3-phosphoglycerate + ATP = (2R)-3-phospho-glyceroyl phosphate + ADP. The protein operates within carbohydrate degradation; glycolysis; pyruvate from D-glyceraldehyde 3-phosphate: step 2/5. The polypeptide is Phosphoglycerate kinase (Mycoplasmoides gallisepticum (strain R(low / passage 15 / clone 2)) (Mycoplasma gallisepticum)).